The primary structure comprises 318 residues: NADH-ubiquinone oxidoreductase chain 1 (318 aa).

8 consecutive transmembrane segments (helical) span residues 3 to 23, 70 to 90, 100 to 120, 146 to 166, 171 to 191, 231 to 251, 254 to 273, and 294 to 314; these read FINI…LTLV, LFII…IPLP, LGML…LWSG, MAII…QMLI, HIWL…STLA, IILM…HINY, LYST…FLWI, and LPLT…LAGI.

This sequence belongs to the complex I subunit 1 family. In terms of assembly, core subunit of respiratory chain NADH dehydrogenase (Complex I) which is composed of 45 different subunits.

It is found in the mitochondrion inner membrane. It carries out the reaction a ubiquinone + NADH + 5 H(+)(in) = a ubiquinol + NAD(+) + 4 H(+)(out). Functionally, core subunit of the mitochondrial membrane respiratory chain NADH dehydrogenase (Complex I) which catalyzes electron transfer from NADH through the respiratory chain, using ubiquinone as an electron acceptor. Essential for the catalytic activity and assembly of complex I. This chain is NADH-ubiquinone oxidoreductase chain 1, found in Rattus norvegicus (Rat).